Reading from the N-terminus, the 253-residue chain is tRNA (guanine-N(1)-)-methyltransferase (253 aa).

S-adenosyl-L-methionine is bound by residues G116 and 136–141 (VGDYIL).

Belongs to the RNA methyltransferase TrmD family. In terms of assembly, homodimer.

Its subcellular location is the cytoplasm. The enzyme catalyses guanosine(37) in tRNA + S-adenosyl-L-methionine = N(1)-methylguanosine(37) in tRNA + S-adenosyl-L-homocysteine + H(+). Specifically methylates guanosine-37 in various tRNAs. The polypeptide is tRNA (guanine-N(1)-)-methyltransferase (Colwellia psychrerythraea (strain 34H / ATCC BAA-681) (Vibrio psychroerythus)).